The chain runs to 64 residues: Large ribosomal subunit protein bL32 (64 aa).

It belongs to the bacterial ribosomal protein bL32 family.

In Flavobacterium psychrophilum (strain ATCC 49511 / DSM 21280 / CIP 103535 / JIP02/86), this protein is Large ribosomal subunit protein bL32.